The sequence spans 171 residues: Shikimate kinase (171 aa).

14–19 (GAGKST) serves as a coordination point for ATP. S18 lines the Mg(2+) pocket. Residues D36, R60, and G82 each coordinate substrate. R120 serves as a coordination point for ATP. R139 provides a ligand contact to substrate. Q156 is an ATP binding site.

It belongs to the shikimate kinase family. In terms of assembly, monomer. Mg(2+) serves as cofactor.

It is found in the cytoplasm. The catalysed reaction is shikimate + ATP = 3-phosphoshikimate + ADP + H(+). The protein operates within metabolic intermediate biosynthesis; chorismate biosynthesis; chorismate from D-erythrose 4-phosphate and phosphoenolpyruvate: step 5/7. Functionally, catalyzes the specific phosphorylation of the 3-hydroxyl group of shikimic acid using ATP as a cosubstrate. This is Shikimate kinase from Shewanella pealeana (strain ATCC 700345 / ANG-SQ1).